The sequence spans 46 residues: Large ribosomal subunit protein bL36B (46 aa).

It belongs to the bacterial ribosomal protein bL36 family.

The protein is Large ribosomal subunit protein bL36B of Cronobacter sakazakii (strain ATCC BAA-894) (Enterobacter sakazakii).